The chain runs to 175 residues: ATP synthase subunit b, chloroplastic (175 aa).

Residues 22–42 form a helical membrane-spanning segment; the sequence is VFETNIINLAAVVGIVVSFVG.

It belongs to the ATPase B chain family. F-type ATPases have 2 components, F(1) - the catalytic core - and F(0) - the membrane proton channel. F(1) has five subunits: alpha(3), beta(3), gamma(1), delta(1), epsilon(1). F(0) has four main subunits: a(1), b(1), b'(1) and c(10-14). The alpha and beta chains form an alternating ring which encloses part of the gamma chain. F(1) is attached to F(0) by a central stalk formed by the gamma and epsilon chains, while a peripheral stalk is formed by the delta, b and b' chains.

The protein resides in the plastid. Its subcellular location is the chloroplast thylakoid membrane. Its function is as follows. F(1)F(0) ATP synthase produces ATP from ADP in the presence of a proton or sodium gradient. F-type ATPases consist of two structural domains, F(1) containing the extramembraneous catalytic core and F(0) containing the membrane proton channel, linked together by a central stalk and a peripheral stalk. During catalysis, ATP synthesis in the catalytic domain of F(1) is coupled via a rotary mechanism of the central stalk subunits to proton translocation. In terms of biological role, component of the F(0) channel, it forms part of the peripheral stalk, linking F(1) to F(0). This is ATP synthase subunit b, chloroplastic from Chlamydomonas reinhardtii (Chlamydomonas smithii).